The following is a 67-amino-acid chain: Large ribosomal subunit protein bL35 (67 aa).

Residues 1–41 are disordered; it reads MPKMKTHRGAAKRFKKTGTGKLKRSHAYTSHMFRHKSQKQK.

The protein belongs to the bacterial ribosomal protein bL35 family.

The polypeptide is Large ribosomal subunit protein bL35 (Shouchella clausii (strain KSM-K16) (Alkalihalobacillus clausii)).